The following is a 41-amino-acid chain: Large ribosomal subunit protein bL36 (41 aa).

The protein belongs to the bacterial ribosomal protein bL36 family.

This is Large ribosomal subunit protein bL36 from Xylella fastidiosa (strain 9a5c).